Reading from the N-terminus, the 229-residue chain is Protein fmp52-2, mitochondrial (229 aa).

The N-terminal 45 residues, 1 to 45 (MTTAAVFGSTGAVGGQILATLLASDAFSSVKTVSRRLPNAQSPKL), are a transit peptide targeting the mitochondrion.

This sequence belongs to the FMP52 family.

The protein resides in the mitochondrion outer membrane. The sequence is that of Protein fmp52-2, mitochondrial (fmp522) from Aspergillus oryzae (strain ATCC 42149 / RIB 40) (Yellow koji mold).